A 91-amino-acid polypeptide reads, in one-letter code: PqqA binding protein 1 (91 aa).

The protein belongs to the PqqD family. Monomer. Interacts with PqqE.

It functions in the pathway cofactor biosynthesis; pyrroloquinoline quinone biosynthesis. Functions as a PqqA binding protein and presents PqqA to PqqE, in the pyrroloquinoline quinone (PQQ) biosynthetic pathway. This is PqqA binding protein 1 (pqqD1) from Pseudomonas putida (strain ATCC 47054 / DSM 6125 / CFBP 8728 / NCIMB 11950 / KT2440).